We begin with the raw amino-acid sequence, 385 residues long: UDP-N-acetylglucosamine--N-acetylmuramyl-(pentapeptide) pyrophosphoryl-undecaprenol N-acetylglucosamine transferase (385 aa).

UDP-N-acetyl-alpha-D-glucosamine contacts are provided by residues 11–13, asparagine 117, arginine 160, serine 215, and glutamine 317; that span reads TGG.

Belongs to the glycosyltransferase 28 family. MurG subfamily.

The protein localises to the cell inner membrane. It carries out the reaction di-trans,octa-cis-undecaprenyl diphospho-N-acetyl-alpha-D-muramoyl-L-alanyl-D-glutamyl-meso-2,6-diaminopimeloyl-D-alanyl-D-alanine + UDP-N-acetyl-alpha-D-glucosamine = di-trans,octa-cis-undecaprenyl diphospho-[N-acetyl-alpha-D-glucosaminyl-(1-&gt;4)]-N-acetyl-alpha-D-muramoyl-L-alanyl-D-glutamyl-meso-2,6-diaminopimeloyl-D-alanyl-D-alanine + UDP + H(+). It functions in the pathway cell wall biogenesis; peptidoglycan biosynthesis. Functionally, cell wall formation. Catalyzes the transfer of a GlcNAc subunit on undecaprenyl-pyrophosphoryl-MurNAc-pentapeptide (lipid intermediate I) to form undecaprenyl-pyrophosphoryl-MurNAc-(pentapeptide)GlcNAc (lipid intermediate II). In Rickettsia typhi (strain ATCC VR-144 / Wilmington), this protein is UDP-N-acetylglucosamine--N-acetylmuramyl-(pentapeptide) pyrophosphoryl-undecaprenol N-acetylglucosamine transferase.